A 715-amino-acid chain; its full sequence is MPAESGKRFKPSKYVPVSAAAIFLVGATTLFFAFTCPGLSLDVSPAVPIYNAIMFLFVLANFSMATFMDPGIFPRAEEDEDKEDDFRAPLYKTVEIKGIQVRMKWCATCRFYRPPRCSHCSVCDNCVEEFDHHCPWVNNCIGRRNYRYFFLFLLSLTAHIMGVFGFGLLYVLCHIEELSGVRTAVTMAVMCVAGLFFIPVAGLTGFHVVLVARGRTTNEQVTGKFRGGVNPFTNGCCNNVSRVLCSSPAPRYLGRPKKEKTIVIRPPFLRPEVSDGQITVKIMDNGIQGELRRTKSKGSLEITESQSADAEPPPPPKPDLSRYTGLRTHLSLATNEDSSLLGKDSPPTPTMYKYRPGYSSSSTSAAMPHSSSAKLSRGDSLKEPTSIADSSRHPSYRSEPSLEPESFRSPTFGKSFHFDPLSSGSRSSSLKSAQGTGFELGQLQSIRSEGTTSTSYKSLANQTRNGSLSYDSLLTPSDSPDFESVQAGPEPDPPLGYTSPFLSARLAQQREAERHPRLLPTGPPHREPSPVRYDNLSRHIVASLQEREKLLRQSPPLAGREEEPGLGDSGIQSTPGSGHAPRTSSSSDDSKRSPLSKTPLGRPAVPRFGKPDGLRGRGLGSPEPGTTAPYLGRSMSYSSQKAPSGVSETEEVALQPLLTPKDEVQLKTTYSKSNGQPKSIGSASPGPGQPPLSSPTRGGVKKVSGVGGTTYEISV.

At 1-13 the chain is on the cytoplasmic side; sequence MPAESGKRFKPSK. A helical transmembrane segment spans residues 14-34; the sequence is YVPVSAAAIFLVGATTLFFAF. The Extracellular portion of the chain corresponds to 35–52; sequence TCPGLSLDVSPAVPIYNA. The chain crosses the membrane as a helical span at residues 53–73; it reads IMFLFVLANFSMATFMDPGIF. Topologically, residues 74–148 are cytoplasmic; the sequence is PRAEEDEDKE…NCIGRRNYRY (75 aa). Phosphotyrosine is present on Tyr-91. Positions 104–154 constitute a DHHC domain; it reads KWCATCRFYRPPRCSHCSVCDNCVEEFDHHCPWVNNCIGRRNYRYFFLFLL. Residue Cys-134 is the S-palmitoyl cysteine intermediate of the active site. The helical transmembrane segment at 149 to 169 threads the bilayer; sequence FFLFLLSLTAHIMGVFGFGLL. The Extracellular portion of the chain corresponds to 170–191; sequence YVLCHIEELSGVRTAVTMAVMC. A helical transmembrane segment spans residues 192-212; the sequence is VAGLFFIPVAGLTGFHVVLVA. The Cytoplasmic portion of the chain corresponds to 213 to 715; that stretch reads RGRTTNEQVT…VGGTTYEISV (503 aa). Ser-247 is modified (phosphoserine). The tract at residues 289–715 is disordered; it reads GELRRTKSKG…VGGTTYEISV (427 aa). At Thr-294 the chain carries Phosphothreonine. Residues Ser-296 and Ser-299 each carry the phosphoserine modification. Residue Thr-303 is modified to Phosphothreonine. Phosphoserine is present on Ser-345. Thr-348 and Thr-350 each carry phosphothreonine. Residues 359–373 show a composition bias toward low complexity; the sequence is SSSSTSAAMPHSSSA. Residues Ser-380, Ser-398, Ser-406, and Ser-409 each carry the phosphoserine modification. At Thr-411 the chain carries Phosphothreonine. Phosphoserine occurs at positions 415, 425, 429, and 432. Positions 422–432 are enriched in low complexity; sequence SSGSRSSSLKS. Thr-436 bears the Phosphothreonine mark. Positions 442–478 are enriched in polar residues; sequence QLQSIRSEGTTSTSYKSLANQTRNGSLSYDSLLTPSD. A phosphoserine mark is found at Ser-529 and Ser-554. The span at 581–597 shows a compositional bias: low complexity; sequence PRTSSSSDDSKRSPLSK. Arg-617 carries the omega-N-methylarginine modification. Ser-621 carries the phosphoserine modification. Phosphothreonine is present on Thr-659. Polar residues predominate over residues 666–677; it reads LKTTYSKSNGQP. Ser-684 and Ser-694 each carry phosphoserine. Arg-697 carries the post-translational modification Omega-N-methylarginine.

Belongs to the DHHC palmitoyltransferase family. ERF2/ZDHHC9 subfamily. Post-translationally, autopalmitoylated. Palmitoylation of the C-terminal tail regulates stimulation-dependent plasma membrane motility. In terms of processing, phosphorylation regulates association with endocytic proteins and its subcellular localization. Phosphorylation by LYN during fatty acid uptake leads to inactivation of the activity.

Its subcellular location is the cell membrane. It carries out the reaction L-cysteinyl-[protein] + hexadecanoyl-CoA = S-hexadecanoyl-L-cysteinyl-[protein] + CoA. Palmitoyltransferase that catalyzes the addition of palmitate onto various protein substrates such as CTNND2, CD36, GSDMD, NLRP3, NOD1, NOD2, STAT3 and S1PR1 thus plays a role in various biological processes including cell adhesion, inflammation, fatty acid uptake, bacterial sensing or cardiac functions. Plays an important role in the regulation of synapse efficacy by mediating palmitoylation of delta-catenin/CTNND2, thereby increasing synaptic delivery and surface stabilization of alpha-amino-3-hydroxy-5-methyl-4-isoxazole propionic acid receptors (AMPARs). Under basal conditions, remains at the synaptic membrane through FYN-mediated phosphorylation that prevents association with endocytic proteins. Neuronal activity enhances the internalization and trafficking of DHHC5 from spines to dendritic shafts where it palmitoylates delta-catenin/CTNND2. Regulates cell adhesion at the plasma membrane by palmitoylating GOLGA7B and DSG2. Plays a role in innate immune response by mediating the palmitoylation of NOD1 and NOD2 and their proper recruitment to the bacterial entry site and phagosomes. Also participates in fatty acid uptake by palmitoylating CD36 and thereby targeting it to the plasma membrane. Upon binding of fatty acids to CD36, gets phosphorylated by LYN leading to inactivation and subsequent CD36 caveolar endocytosis. Controls oligodendrocyte development by catalyzing STAT3 palmitoylation. Acts as a regulator of inflammatory response by mediating palmitoylation of NLRP3 and GSDMD. Palmitoylates NLRP3 to promote inflammasome assembly and activation. Activates pyroptosis by catalyzing palmitoylation of gasdermin-D (GSDMD), thereby promoting membrane translocation and pore formation of GSDMD. This Rattus norvegicus (Rat) protein is Palmitoyltransferase ZDHHC5 (Zdhhc5).